A 350-amino-acid polypeptide reads, in one-letter code: Methionine import ATP-binding protein MetN (350 aa).

Positions 2–241 (IQIKNLKKEY…PQAPVTRSFV (240 aa)) constitute an ABC transporter domain. 38-45 (GHSGAGKS) serves as a coordination point for ATP.

This sequence belongs to the ABC transporter superfamily. Methionine importer (TC 3.A.1.24) family. As to quaternary structure, the complex is composed of two ATP-binding proteins (MetN), two transmembrane proteins (MetI) and a solute-binding protein (MetQ).

The protein resides in the cell inner membrane. The catalysed reaction is L-methionine(out) + ATP + H2O = L-methionine(in) + ADP + phosphate + H(+). The enzyme catalyses D-methionine(out) + ATP + H2O = D-methionine(in) + ADP + phosphate + H(+). Its function is as follows. Part of the ABC transporter complex MetNIQ involved in methionine import. Responsible for energy coupling to the transport system. This chain is Methionine import ATP-binding protein MetN, found in Francisella tularensis subsp. tularensis (strain SCHU S4 / Schu 4).